The following is a 231-amino-acid chain: LexA repressor (231 aa).

Positions 26-46 (FDEMKLALDLRSKSGIHRLIT) form a DNA-binding region, H-T-H motif. The segment at 79-98 (VGFQPRVIDGDRPDRPRPAN) is disordered. Positions 86–95 (IDGDRPDRPR) are enriched in basic and acidic residues. Catalysis depends on for autocatalytic cleavage activity residues serine 152 and lysine 190.

This sequence belongs to the peptidase S24 family. As to quaternary structure, homodimer.

The enzyme catalyses Hydrolysis of Ala-|-Gly bond in repressor LexA.. Functionally, represses a number of genes involved in the response to DNA damage (SOS response), including recA and lexA. In the presence of single-stranded DNA, RecA interacts with LexA causing an autocatalytic cleavage which disrupts the DNA-binding part of LexA, leading to derepression of the SOS regulon and eventually DNA repair. The chain is LexA repressor from Ruegeria pomeroyi (strain ATCC 700808 / DSM 15171 / DSS-3) (Silicibacter pomeroyi).